The chain runs to 642 residues: Threonine--tRNA ligase (642 aa).

The TGS domain occupies 1-58 (MQVAGKELEVQQGALCGEVLKEALSKKQFKNVVVAKCGDTLLDLTTTVPADCTDLEPV). Residues 239 to 530 (DHRKLGTQLD…LLEHTGGALP (292 aa)) are catalytic. Residues C331, H382, and H507 each coordinate Zn(2+).

Belongs to the class-II aminoacyl-tRNA synthetase family. Homodimer. Zn(2+) is required as a cofactor.

It localises to the cytoplasm. The enzyme catalyses tRNA(Thr) + L-threonine + ATP = L-threonyl-tRNA(Thr) + AMP + diphosphate + H(+). Functionally, catalyzes the attachment of threonine to tRNA(Thr) in a two-step reaction: L-threonine is first activated by ATP to form Thr-AMP and then transferred to the acceptor end of tRNA(Thr). Also edits incorrectly charged L-seryl-tRNA(Thr). In Maridesulfovibrio salexigens (strain ATCC 14822 / DSM 2638 / NCIMB 8403 / VKM B-1763) (Desulfovibrio salexigens), this protein is Threonine--tRNA ligase.